A 120-amino-acid chain; its full sequence is V-type proton ATPase subunit F (120 aa).

This sequence belongs to the V-ATPase F subunit family. In terms of assembly, V-ATPase is a heteromultimeric enzyme composed of a peripheral catalytic V1 complex (components A to H) attached to an integral membrane V0 proton pore complex (components: a, c, c', c'', d, e, f and VOA1).

Its subcellular location is the vacuole membrane. Subunit of the V1 complex of vacuolar(H+)-ATPase (V-ATPase), a multisubunit enzyme composed of a peripheral complex (V1) that hydrolyzes ATP and a membrane integral complex (V0) that translocates protons. V-ATPase is responsible for acidifying and maintaining the pH of intracellular compartments. This is V-type proton ATPase subunit F from Schizosaccharomyces pombe (strain 972 / ATCC 24843) (Fission yeast).